The sequence spans 861 residues: MEKEYCPKNIEPYVQQYWKDNKVFHVYEDDKKEKYYCLPMLPYPSGKLHMGHVRNYTISDVISRYQRMLGKNVLQPIGWDAFGLPAEEAAIKNKTKPSDWTQKNIKYMKKQLQSLGFSYDWSREITTCKPDYYCWEQWFFIQLYKKKLVYKKNSFVNWCPYDKTVLANEQVIKGCCWRCQNKIKVKKIPQWFIKIRNYAESLHNDLNDLENWPEKVKNMQRNWIGRSKGFEIVFNVLNSNKKIKAFTNRLDLIMGATYISISPCHEFSVHVSKEKKEIQKFIDQKINNSASQEDIEKIKFEGINSNMFVIHPITNKKIPVWISNFIQKEYGTNAIISVPGHNQNDWNFSIKHNLKIKYVIKNKKYKNTQLHNLFTTEKGILYNSGEFNNLNYHNATEKIKKTLLKKKIIKEKINYKLQDWCISRQRYWGTPIPMATKKNGEIIAIPEKNLPVLLPEIKNYSDSLQKPMDSSSKWANIKIENQDVIRETDTFDTFMESSWYYARYTCPNFNTGMIDPTASKYWLPVDQYIGGIEHATMHLIYFRFYHKLLRDFKLVELNEPVKNLICQGMVLSEAFYQFDKNNQRNWIHPSCVQVEKNLKGETIKVDIKNKKKVIYAGMIKMSKSKNNGIEPELMINRYGADTLRLFIMFAAPIESSLEWRESGVKGIYRFLKKIWKLVFNHIEVKKINKKVNFDILNKKQKKMYCLLHKTIIKVSDDIGRRKSFNTAISSIMELVNELSIFKIENEEDKSIIKESLMSIIKMLYPFTPHFCFRLWQYLNKNCCIDYETWPTFEKKILSSDKNTLIIQINGKKQCAIEVKNHLNKEEILSYIENQSIIQKKIKNLKIIKIIYIPQKVINFVV.

A 'HIGH' region motif is present at residues 42-52; it reads PYPSGKLHMGH. The short motif at 620–624 is the 'KMSKS' region element; sequence KMSKS. Position 623 (lysine 623) interacts with ATP.

This sequence belongs to the class-I aminoacyl-tRNA synthetase family.

It localises to the cytoplasm. The catalysed reaction is tRNA(Leu) + L-leucine + ATP = L-leucyl-tRNA(Leu) + AMP + diphosphate. The sequence is that of Leucine--tRNA ligase from Buchnera aphidicola subsp. Schizaphis graminum (strain Sg).